Consider the following 177-residue polypeptide: Large ribosomal subunit protein uL6 (177 aa).

Belongs to the universal ribosomal protein uL6 family. In terms of assembly, part of the 50S ribosomal subunit.

Its function is as follows. This protein binds to the 23S rRNA, and is important in its secondary structure. It is located near the subunit interface in the base of the L7/L12 stalk, and near the tRNA binding site of the peptidyltransferase center. This Aliivibrio salmonicida (strain LFI1238) (Vibrio salmonicida (strain LFI1238)) protein is Large ribosomal subunit protein uL6.